Here is a 2000-residue protein sequence, read N- to C-terminus: Myosin-14 (2000 aa).

Ala2 carries the post-translational modification N-acetylalanine. Position 33 is a phosphothreonine (Thr33). The region spanning 47–97 (TARRMVWVPSELHGFEAAALRDEGEEEAEVELAESGRRLRLPRDQIQRMNP) is the Myosin N-terminal SH3-like domain. The residue at position 56 (Ser56) is a Phosphoserine. The 704-residue stretch at 101 to 804 (SKAEDMAELT…VLAQLEEERD (704 aa)) folds into the Myosin motor domain. Position 194 to 201 (194 to 201 (GESGAGKT)) interacts with ATP. The segment at 682–704 (LSRLMATLSNTNPSFVRCIVPNH) is actin-binding. Residues 807 to 836 (VTDIIVSFQAAARGYLARRAFQRRQQQQSA) form the IQ domain. The stretch at 866 to 1951 (LQVTRQDEVL…VTTLRNRLRR (1086 aa)) forms a coiled coil. Ser925 is subject to Phosphoserine. Positions 1173 to 1197 (RGELEDTLDSTNAQQELRSKREQEV) are disordered. The residue at position 1198 (Thr1198) is a Phosphothreonine. A phosphoserine mark is found at Ser1249 and Ser1280. 5 disordered regions span residues 1260–1311 (ELSS…AELE), 1597–1629 (HERD…RDEE), 1720–1751 (SDRA…TLEE), 1910–1942 (AEEE…NREV), and 1967–2000 (LEEG…ATPQ). Positions 1290 to 1304 (SDSERARSEAAEKLQ) are enriched in basic and acidic residues. Residues 1720–1732 (SDRARRQAQQDRD) are compositionally biased toward basic and acidic residues. Residues 1971-1980 (VASDEEEAEG) show a composition bias toward acidic residues. Phosphoserine occurs at positions 1973 and 1985. Positions 1981–1991 (AEPGSAPGQEP) are enriched in low complexity. Phosphothreonine is present on Thr1998.

The protein belongs to the TRAFAC class myosin-kinesin ATPase superfamily. Myosin family. In terms of assembly, myosin is a hexameric protein that consists of 2 heavy chain subunits (MHC), 2 alkali light chain subunits (MLC) and 2 regulatory light chain subunits (MLC-2). Highest levels in lung, kidney, brain and colon, very low levels in liver and bladder and no expression in spleen or seminal vesicle (at protein level). Isoform 1 is expressed in liver, kidney and testis with low levels in skeletal muscle and heart. Isoform 1 and isoform 2 are expressed in brain and lung. Isoform 2 is the main isoform expressed in skeletal muscle and heart. Isoform 3 is limited to brain stem, cerebellum and spinal cord.

Its function is as follows. Cellular myosin that appears to play a role in cytokinesis, cell shape, and specialized functions such as secretion and capping. This chain is Myosin-14 (Myh14), found in Mus musculus (Mouse).